The following is a 1192-amino-acid chain: Probable phospholipid-transporting ATPase IM (1192 aa).

Topologically, residues 1 to 44 are cytoplasmic; sequence MFCSEKKLREVERIVKANDREYNEKFQYADNRIHTSKYNILTFL. Residues 45–66 traverse the membrane as a helical segment; that stretch reads PINLFEQFQRVANAYFLCLLIL. At 67-72 the chain is on the exoplasmic loop side; sequence QLIPEI. Residues 73-92 traverse the membrane as a helical segment; sequence SSLTWFTTIVPLVLVITMTA. Topologically, residues 93-276 are cytoplasmic; the sequence is VKDATDDYFR…TSIDRLMNTL (184 aa). A helical membrane pass occupies residues 277 to 298; the sequence is VLWIFGFLICLGIILAIGNSIW. At 299–327 the chain is on the exoplasmic loop side; that stretch reads ESQTGDQFRTFLFWNEGEKSSVFSGFLTF. The helical transmembrane segment at 328–349 threads the bilayer; the sequence is WSYIIILNTVVPISLYVSVEVI. Residues 350–871 lie on the Cytoplasmic side of the membrane; that stretch reads RLGHSYFINW…GRWSYFRMCK (522 aa). Asp392 acts as the 4-aspartylphosphate intermediate in catalysis. Residues Asp392, Lys393, Thr394, Glu496, Phe537, Lys560, Arg594, Thr674, Gly675, Asp676, Arg789, and Lys795 each contribute to the ATP site. Mg(2+) is bound at residue Asp392. Position 394 (Thr394) interacts with Mg(2+). A Mg(2+)-binding site is contributed by Asp815. Residues Asn818 and Asp819 each contribute to the ATP site. Asp819 serves as a coordination point for Mg(2+). The chain crosses the membrane as a helical span at residues 872–892; it reads FLCYFFYKNFAFTLVHFWFGF. At 893–904 the chain is on the exoplasmic loop side; that stretch reads FCGFSAQTVYDQ. The helical transmembrane segment at 905–924 threads the bilayer; sequence WFITLFNIVYTSLPVLAMGI. Over 925–954 the chain is Cytoplasmic; the sequence is FDQDVSDQNSVDCPQLYKPGQLNLLFNKRK. A helical transmembrane segment spans residues 955 to 976; it reads FFICVLHGIYTSLVLFFIPYGA. Residues 977–990 are Exoplasmic loop-facing; that stretch reads FYNVAGEDGQHIAD. A helical transmembrane segment spans residues 991–1013; that stretch reads YQSFAVTMATSLVIVVSVQIALD. At 1014–1019 the chain is on the cytoplasmic side; the sequence is TSYWTF. Residues 1020-1040 form a helical membrane-spanning segment; the sequence is INHVFIWGSIAIYFSILFTMH. The Exoplasmic loop segment spans residues 1041-1060; the sequence is SNGIFGIFPNQFPFVGNARH. The helical transmembrane segment at 1061 to 1085 threads the bilayer; the sequence is SLTQKCIWLVILLTTVASVMPVVAF. The Cytoplasmic segment spans residues 1086-1192; sequence RFLKVDLYPT…SFSQDKTVKL (107 aa). Basic residues predominate over residues 1104–1125; the sequence is QKAQKKARPPSSRRPRTRRSSS. Disordered stretches follow at residues 1104 to 1130 and 1143 to 1163; these read QKAQ…RSGY and TSGK…EKTH.

This sequence belongs to the cation transport ATPase (P-type) (TC 3.A.3) family. Type IV subfamily. Component of a P4-ATPase flippase complex which consists of a catalytic alpha subunit and an accessory beta subunit. Interacts with beta subunits TMEM30A and TMEM30B. Requires Mg(2+) as cofactor. As to expression, ubiquitously expressed at moderate levels.

It localises to the cell membrane. It is found in the golgi apparatus. The enzyme catalyses ATP + H2O + phospholipidSide 1 = ADP + phosphate + phospholipidSide 2.. Functionally, component of a P4-ATPase flippase complex which catalyzes the hydrolysis of ATP coupled to the transport of aminophospholipids from the outer to the inner leaflet of various membranes and ensures the maintenance of asymmetric distribution of phospholipids. Phospholipid translocation also seems to be implicated in vesicle formation and in uptake of lipid signaling molecules. This Homo sapiens (Human) protein is Probable phospholipid-transporting ATPase IM (ATP8B4).